A 62-amino-acid polypeptide reads, in one-letter code: MRCLPVFVVLLLLIASAPSVDAQPKTKDDVPLAPLHDNIQNTLQTLRKKVCCRPMQDCCSGK.

The N-terminal stretch at 1 to 22 is a signal peptide; that stretch reads MRCLPVFVVLLLLIASAPSVDA. Positions 23 to 47 are excised as a propeptide; sequence QPKTKDDVPLAPLHDNIQNTLQTLR. Met55 carries the methionine sulfoxide; partial modification. Ser60 bears the Serine amide mark.

It belongs to the conotoxin T superfamily. Contains 2 disulfide bonds. In terms of processing, contains 2 disulfide bonds that can be either 'C1-C3, C2-C4' or 'C1-C4, C2-C3', since these disulfide connectivities have been observed for conotoxins with cysteine framework V (for examples, see AC P0DQQ7 and AC P81755).. Expressed by the venom duct. Is mostly present in part 5 of the venom duct (distal part near the pharynx), and less abundantly present in part 4 of the venom duct.

Its subcellular location is the secreted. This Conus textile (Cloth-of-gold cone) protein is Conotoxin TeAr151.